We begin with the raw amino-acid sequence, 330 residues long: Solute-binding protein NAS141_03721 (330 aa).

Residues 1 to 27 form the signal peptide; the sequence is MSFFTKTAQLVSGAAVAATLFTATAQA. Residues E75, N97, R153, R173, Y196, 213-214, and R240 each bind alpha-D-mannuronate; that span reads NE. Residues E75, N97, R153, R173, Y196, 213 to 214, and R240 contribute to the alpha-D-taluronate site; that span reads NE.

Belongs to the bacterial solute-binding protein 7 family. In terms of assembly, the complex is comprised of an extracytoplasmic solute-binding protein and a heteromeric permease formed by two transmembrane proteins.

The protein resides in the periplasm. In terms of biological role, solute-binding protein that binds D-mannuronate and D-taluronate (in vitro). Probably part of a tripartite ATP-independent periplasmic (TRAP) transport system that mediates solute transport into the cytoplasm. This chain is Solute-binding protein NAS141_03721, found in Sulfitobacter sp. (strain NAS-14.1).